A 228-amino-acid chain; its full sequence is Sec-independent protein translocase protein TatB (228 aa).

Residues 1-21 traverse the membrane as a helical segment; sequence MFDFGLGELVFVGIIALIVLG. Disordered regions lie at residues 109 to 162 and 197 to 228; these read DFGV…AETD and PHTTSLRKQAISRKRDFRPKHRAKPKLRVRKS. The span at 206–228 shows a compositional bias: basic residues; that stretch reads AISRKRDFRPKHRAKPKLRVRKS.

The protein belongs to the TatB family. As to quaternary structure, the Tat system comprises two distinct complexes: a TatABC complex, containing multiple copies of TatA, TatB and TatC subunits, and a separate TatA complex, containing only TatA subunits. Substrates initially bind to the TatABC complex, which probably triggers association of the separate TatA complex to form the active translocon.

The protein localises to the cell inner membrane. In terms of biological role, part of the twin-arginine translocation (Tat) system that transports large folded proteins containing a characteristic twin-arginine motif in their signal peptide across membranes. Together with TatC, TatB is part of a receptor directly interacting with Tat signal peptides. TatB may form an oligomeric binding site that transiently accommodates folded Tat precursor proteins before their translocation. The protein is Sec-independent protein translocase protein TatB of Neisseria meningitidis serogroup B (strain ATCC BAA-335 / MC58).